Here is a 181-residue protein sequence, read N- to C-terminus: Translationally-controlled tumor protein homolog (181 aa).

The region spanning 1 to 181 (MLIYKDIFTD…VKEAILEEKC (181 aa)) is the TCTP domain.

It belongs to the TCTP family.

The protein resides in the cytoplasm. In terms of biological role, involved in calcium binding and microtubule stabilization. This Caenorhabditis briggsae protein is Translationally-controlled tumor protein homolog (tct-1).